The primary structure comprises 207 residues: Dephospho-CoA kinase (207 aa).

The region spanning 5-202 is the DPCK domain; that stretch reads VVGLTGGIGS…LQYLKLSAEK (198 aa). Residue 13–18 participates in ATP binding; the sequence is GSGKST.

Belongs to the CoaE family.

The protein localises to the cytoplasm. The catalysed reaction is 3'-dephospho-CoA + ATP = ADP + CoA + H(+). The protein operates within cofactor biosynthesis; coenzyme A biosynthesis; CoA from (R)-pantothenate: step 5/5. In terms of biological role, catalyzes the phosphorylation of the 3'-hydroxyl group of dephosphocoenzyme A to form coenzyme A. In Dechloromonas aromatica (strain RCB), this protein is Dephospho-CoA kinase.